The primary structure comprises 309 residues: Taste receptor type 2 member 31 (309 aa).

The Extracellular portion of the chain corresponds to 1–2 (MT). Residues 3–23 (TFIPIIFSSLVMVMFVTGNFA) form a helical membrane-spanning segment. Over 24–55 (NGFIALVNSIESVKRQKISYADQILTALAVSR) the chain is Cytoplasmic. A helical transmembrane segment spans residues 56–76 (IGLLWVLLLNWYSTVLNPAFY). Residues 77–100 (SVEVRTTAYNVWAVTGHFSNWLAT) lie on the Extracellular side of the membrane. Residues 101–121 (SLSIFYLLKIANFSNLIFLHL) traverse the membrane as a helical segment. Topologically, residues 122–126 (KRRVK) are cytoplasmic. The helical transmembrane segment at 127-147 (SVILVMLLGPLLFLACQLFVI) threads the bilayer. Topologically, residues 148–181 (NMKEIVQTKEYEGNXTWKIKLRSAVYLSDATVTT) are extracellular. A glycan (N-linked (GlcNAc...) asparagine) is linked at asparagine 161. The helical transmembrane segment at 182–202 (LGNLVPFTLTLLCFLLLICSL) threads the bilayer. The Cytoplasmic portion of the chain corresponds to 203-229 (CKHLKKMQLHGKGSQDPSMKVHIKALQ). A helical membrane pass occupies residues 230 to 250 (TVTSFLLLCAIYFLSIMISVW). Residues 251-259 (SLGSLKNKP) are Extracellular-facing. A helical membrane pass occupies residues 260 to 280 (VFMFCKAMRFSYPSIHPFILI). Topologically, residues 281-309 (WGNKKLKQTFLSVLQQVRYWVKGEKPSSP) are cytoplasmic.

It belongs to the G-protein coupled receptor T2R family.

It is found in the membrane. Functionally, receptor that may play a role in the perception of bitterness and is gustducin-linked. May play a role in sensing the chemical composition of the gastrointestinal content. The activity of this receptor may stimulate alpha gustducin, mediate PLC-beta-2 activation and lead to the gating of TRPM5. The protein is Taste receptor type 2 member 31 (TAS2R31) of Gorilla gorilla gorilla (Western lowland gorilla).